The chain runs to 283 residues: Shikimate kinase (283 aa).

Residue 86-96 participates in ATP binding; that stretch reads PIKSGLSSSSA.

Belongs to the GHMP kinase family. Archaeal shikimate kinase subfamily.

Its subcellular location is the cytoplasm. The catalysed reaction is shikimate + ATP = 3-phosphoshikimate + ADP + H(+). It functions in the pathway metabolic intermediate biosynthesis; chorismate biosynthesis; chorismate from D-erythrose 4-phosphate and phosphoenolpyruvate: step 5/7. The sequence is that of Shikimate kinase from Methanococcus maripaludis (strain C6 / ATCC BAA-1332).